We begin with the raw amino-acid sequence, 203 residues long: Thymidylate kinase (203 aa).

10–17 (GVEGSGKT) lines the ATP pocket.

Belongs to the thymidylate kinase family.

It catalyses the reaction dTMP + ATP = dTDP + ADP. Phosphorylation of dTMP to form dTDP in both de novo and salvage pathways of dTTP synthesis. The sequence is that of Thymidylate kinase from Carboxydothermus hydrogenoformans (strain ATCC BAA-161 / DSM 6008 / Z-2901).